The sequence spans 343 residues: Serpentine receptor class alpha-11 (343 aa).

Over 1–24 (MSSPDTPVCASPQQMEMYNSHFYT) the chain is Extracellular. Residues 25–45 (CALFFNLLIAFTSMTLIIMAI) form a helical membrane-spanning segment. The Cytoplasmic portion of the chain corresponds to 46-60 (RKLLTESIINTSTRM). A helical membrane pass occupies residues 61–81 (FLIVGLLCCSLHQTAYIVLRV). The Extracellular segment spans residues 82–106 (QVIFQILFKLDQPCKLYYKAYDCKY). A helical membrane pass occupies residues 107-127 (VTFSLVAGNTGMIFIQSAMTI). The Cytoplasmic portion of the chain corresponds to 128–146 (DRILTTVFTNLWPKLKYWP). A helical transmembrane segment spans residues 147 to 167 (GVILSSFMIGCNFTNVQFIFW). At 168 to 192 (NDPLTDYVPTCGQFPPKSVGRFQKF) the chain is on the extracellular side. A helical transmembrane segment spans residues 193-213 (LEIALYMSLAHMVINVIILYI). The Cytoplasmic segment spans residues 214–247 (NVVQDRRQRLVSTHDQSQSFDVNQRFQSRVALKS). Residues 248 to 268 (TQAIFFLSMSQFLSCFLYTIF) traverse the membrane as a helical segment. Residues 269 to 291 (TKLYLTLQPDMTPLQSGLTLALT) are Extracellular-facing. A helical transmembrane segment spans residues 292 to 312 (YTTPYACIAIPSLIMVTLTFI). Topologically, residues 313-343 (RNQRHRSINALRSQTETGDQYMQKIKKIWDK) are cytoplasmic.

Belongs to the nematode receptor-like protein sra family.

It localises to the membrane. Functionally, a G protein-coupled receptor required for olfactory imprinting a requisite in ordorant response such as benzaldehyde and isoamylalcohol. The protein is Serpentine receptor class alpha-11 of Caenorhabditis briggsae.